The following is a 1358-amino-acid chain: Phosphoinositide 3-kinase regulatory subunit 4 (1358 aa).

The N-myristoyl glycine moiety is linked to residue G2. The Protein kinase domain occupies 26 to 324; that stretch reads FEYDKSLGST…AFPEIFYTFL (299 aa). Residues 32-40 and K53 contribute to the ATP site; that span reads LGSTRFFKV. Catalysis depends on D148, which acts as the Proton acceptor. HEAT repeat units lie at residues 413–450, 458–495, and 572–610; these read ILLD…LVKE, IYPE…TALR, and KAND…YVGW. Residues S808, S813, S853, and S865 each carry the phosphoserine modification. Residues 875 to 898 form a disordered region; that stretch reads LPKGSDQEVIQTGKPPRSESSAGI. WD repeat units lie at residues 991 to 1030, 1040 to 1079, 1093 to 1134, 1139 to 1178, 1182 to 1223, and 1237 to 1278; these read EHKS…GKTT, RIGG…LPKS, KEDG…NAWT, LKSG…PISS, PSRA…RRFT, and PSPH…RSYV. The disordered stretch occupies residues 1307–1326; that stretch reads KQKVGPSDDTPRRGPESLPV. Positions 1315–1326 are enriched in basic and acidic residues; it reads DTPRRGPESLPV. T1316 is modified (phosphothreonine). A WD 7 repeat occupies 1327–1358; it reads GHHDIITDVATFQTTQGFIVTASRDGIVKVWK.

It belongs to the protein kinase superfamily. Ser/Thr protein kinase family. In terms of assembly, component of the PI3K (PI3KC3/PI3K-III/class III phosphatidylinositol 3-kinase) complex the core of which is composed of the catalytic subunit PIK3C3, the regulatory subunit PIK3R4 and BECN1 associating with additional regulatory/auxiliary subunits to form alternative complex forms. Alternative complex forms containing a fourth regulatory subunit in a mutually exclusive manner are PI3K complex I (PI3KC3-C1) containing ATG14, and PI3K complex II (PI3KC3-C2) containing UVRAG. PI3KC3-C1 displays a V-shaped architecture with PIK3R4 serving as a bridge between PIK3C3 and the ATG14:BECN1 subcomplex. Both, PI3KC3-C1 and PI3KC3-C2, can associate with further regulatory subunits, such as RUBCN, SH3GLB1/Bif-1, AMBRA1 and NRBF2. PI3KC3-C1 probably associates with PIK3CB. Interacts with RAB7A in the presence of PIK3C3/VPS34. Interacts with NRBF2. Interacts with ARMC3. It depends on Mn(2+) as a cofactor. In terms of processing, myristoylated. Post-translationally, probably autophosphorylated. Ubiquitously expressed.

The protein localises to the late endosome. It localises to the cytoplasmic vesicle. Its subcellular location is the autophagosome. The protein resides in the membrane. It catalyses the reaction L-seryl-[protein] + ATP = O-phospho-L-seryl-[protein] + ADP + H(+). The catalysed reaction is L-threonyl-[protein] + ATP = O-phospho-L-threonyl-[protein] + ADP + H(+). Functionally, regulatory subunit of the PI3K complex that mediates formation of phosphatidylinositol 3-phosphate; different complex forms are believed to play a role in multiple membrane trafficking pathways: PI3KC3-C1 is involved in initiation of autophagosomes and PI3KC3-C2 in maturation of autophagosomes and endocytosis. Involved in regulation of degradative endocytic trafficking and cytokinesis, probably in the context of PI3KC3-C2. In Homo sapiens (Human), this protein is Phosphoinositide 3-kinase regulatory subunit 4 (PIK3R4).